We begin with the raw amino-acid sequence, 200 residues long: Imidazoleglycerol-phosphate dehydratase (200 aa).

The protein belongs to the imidazoleglycerol-phosphate dehydratase family.

Its subcellular location is the cytoplasm. The catalysed reaction is D-erythro-1-(imidazol-4-yl)glycerol 3-phosphate = 3-(imidazol-4-yl)-2-oxopropyl phosphate + H2O. It participates in amino-acid biosynthesis; L-histidine biosynthesis; L-histidine from 5-phospho-alpha-D-ribose 1-diphosphate: step 6/9. In Renibacterium salmoninarum (strain ATCC 33209 / DSM 20767 / JCM 11484 / NBRC 15589 / NCIMB 2235), this protein is Imidazoleglycerol-phosphate dehydratase.